A 178-amino-acid polypeptide reads, in one-letter code: Large ribosomal subunit protein uL6 (178 aa).

The protein belongs to the universal ribosomal protein uL6 family. Part of the 50S ribosomal subunit.

Functionally, this protein binds to the 23S rRNA, and is important in its secondary structure. It is located near the subunit interface in the base of the L7/L12 stalk, and near the tRNA binding site of the peptidyltransferase center. This is Large ribosomal subunit protein uL6 from Helicobacter acinonychis (strain Sheeba).